A 373-amino-acid chain; its full sequence is Maltose/maltodextrin import ATP-binding protein MalK (373 aa).

Residues Val-4–Ile-234 enclose the ABC transporter domain. Gly-36–Ser-43 provides a ligand contact to ATP.

Belongs to the ABC transporter superfamily. Maltooligosaccharide importer (TC 3.A.1.1.1) family. In terms of assembly, the complex is composed of two ATP-binding proteins (MalK), two transmembrane proteins (MalG and MalK) and a solute-binding protein (MalE).

It localises to the cell inner membrane. The enzyme catalyses D-maltose(out) + ATP + H2O = D-maltose(in) + ADP + phosphate + H(+). Functionally, part of the ABC transporter complex MalEFGK involved in maltose/maltodextrin import. Responsible for energy coupling to the transport system. In Vibrio cholerae serotype O1 (strain ATCC 39315 / El Tor Inaba N16961), this protein is Maltose/maltodextrin import ATP-binding protein MalK.